A 407-amino-acid polypeptide reads, in one-letter code: L-cysteine:1D-myo-inositol 2-amino-2-deoxy-alpha-D-glucopyranoside ligase (407 aa).

Residue Cys-43 coordinates Zn(2+). L-cysteinyl-5'-AMP-binding positions include 43–46, Thr-58, and 81–83; these read CGIT and NAT. Residues 45-55 carry the 'HIGH' region motif; that stretch reads ITPYDATHLGH. The short motif at 183 to 188 is the 'ERGGDP' region element; that stretch reads QRGGDP. Trp-223 is a binding site for L-cysteinyl-5'-AMP. Residue Cys-227 coordinates Zn(2+). 245–247 contacts L-cysteinyl-5'-AMP; that stretch reads GSD. His-252 provides a ligand contact to Zn(2+). Val-279 lines the L-cysteinyl-5'-AMP pocket. The 'KMSKS' region signature appears at 285-289; that stretch reads KMSKS.

It belongs to the class-I aminoacyl-tRNA synthetase family. MshC subfamily. Monomer. Requires Zn(2+) as cofactor.

The catalysed reaction is 1D-myo-inositol 2-amino-2-deoxy-alpha-D-glucopyranoside + L-cysteine + ATP = 1D-myo-inositol 2-(L-cysteinylamino)-2-deoxy-alpha-D-glucopyranoside + AMP + diphosphate + H(+). Its function is as follows. Catalyzes the ATP-dependent condensation of GlcN-Ins and L-cysteine to form L-Cys-GlcN-Ins. The polypeptide is L-cysteine:1D-myo-inositol 2-amino-2-deoxy-alpha-D-glucopyranoside ligase (Streptosporangium roseum (strain ATCC 12428 / DSM 43021 / JCM 3005 / KCTC 9067 / NCIMB 10171 / NRRL 2505 / NI 9100)).